Consider the following 156-residue polypeptide: MNFNATFIGQMVAFAIFIYLTYRYVWPPIVAAMAERSKRIADGLQAADRAEKDLELAQKKVVEQLTSAKKEAAAIIDQANKRAIEIVEEAKLKAQQEAERVKASAQAEIELATSRAKEELRSKVVVLALAGAEKILESSIDQNAHNELVNKLAAEL.

Residues 7–26 traverse the membrane as a helical segment; that stretch reads FIGQMVAFAIFIYLTYRYVW.

The protein belongs to the ATPase B chain family. F-type ATPases have 2 components, F(1) - the catalytic core - and F(0) - the membrane proton channel. F(1) has five subunits: alpha(3), beta(3), gamma(1), delta(1), epsilon(1). F(0) has three main subunits: a(1), b(2) and c(10-14). The alpha and beta chains form an alternating ring which encloses part of the gamma chain. F(1) is attached to F(0) by a central stalk formed by the gamma and epsilon chains, while a peripheral stalk is formed by the delta and b chains.

It localises to the cell inner membrane. Functionally, f(1)F(0) ATP synthase produces ATP from ADP in the presence of a proton or sodium gradient. F-type ATPases consist of two structural domains, F(1) containing the extramembraneous catalytic core and F(0) containing the membrane proton channel, linked together by a central stalk and a peripheral stalk. During catalysis, ATP synthesis in the catalytic domain of F(1) is coupled via a rotary mechanism of the central stalk subunits to proton translocation. In terms of biological role, component of the F(0) channel, it forms part of the peripheral stalk, linking F(1) to F(0). This chain is ATP synthase subunit b, found in Cellvibrio japonicus (strain Ueda107) (Pseudomonas fluorescens subsp. cellulosa).